The sequence spans 77 residues: MIFIFISFLSLFFKWQRLMFILISLEFIVMSLFILFSGDLNEMMFFYFMCFSVVSSVLGMVVMVGNVKFYGSDLCLF.

A run of 2 helical transmembrane segments spans residues 18–38 (LMFILISLEFIVMSLFILFSG) and 44–64 (MFFYFMCFSVVSSVLGMVVMV).

Belongs to the complex I subunit 4L family.

Its subcellular location is the mitochondrion membrane. The enzyme catalyses a ubiquinone + NADH + 5 H(+)(in) = a ubiquinol + NAD(+) + 4 H(+)(out). In terms of biological role, core subunit of the mitochondrial membrane respiratory chain NADH dehydrogenase (Complex I) that is believed to belong to the minimal assembly required for catalysis. Complex I functions in the transfer of electrons from NADH to the respiratory chain. The immediate electron acceptor for the enzyme is believed to be ubiquinone. The sequence is that of NADH-ubiquinone oxidoreductase chain 4L (ND4L) from Ascaris suum (Pig roundworm).